The following is a 204-amino-acid chain: Large ribosomal subunit protein eL15 (204 aa).

Gly-2 is lipidated: N-myristoyl glycine. Ser-34 bears the Phosphoserine mark. A Glycyl lysine isopeptide (Lys-Gly) (interchain with G-Cter in SUMO2) cross-link involves residue Lys-83. A phosphoserine mark is found at Ser-97 and Ser-100. Residues 165-186 are disordered; that stretch reads TSAGRKSRGLGKGHKFHHTIGG. Residues 169–182 are compositionally biased toward basic residues; the sequence is RKSRGLGKGHKFHH.

It belongs to the eukaryotic ribosomal protein eL15 family. As to quaternary structure, component of the large ribosomal subunit. Interacts with IFIT1 (via TPR repeats 1-4).

It localises to the cytoplasm. Functionally, component of the large ribosomal subunit. The ribosome is a large ribonucleoprotein complex responsible for the synthesis of proteins in the cell. The protein is Large ribosomal subunit protein eL15 (RPL15) of Bos taurus (Bovine).